The primary structure comprises 434 residues: Probable phosphatidylinositol 3,4,5-trisphosphate 3-phosphatase TEP1 (434 aa).

Positions 33–255 (KTKNDIGLRL…RYHEFFITHE (223 aa)) constitute a Phosphatase tensin-type domain. C193 acts as the Phosphocysteine intermediate in catalysis.

It catalyses the reaction a 1,2-diacyl-sn-glycero-3-phospho-(1D-myo-inositol-3,4,5-trisphosphate) + H2O = a 1,2-diacyl-sn-glycero-3-phospho-(1D-myo-inositol-4,5-bisphosphate) + phosphate. Its function is as follows. May act as a phosphoinositide 3-phosphatase by regulating PtdIns(3,4,5)P3 levels. The sequence is that of Probable phosphatidylinositol 3,4,5-trisphosphate 3-phosphatase TEP1 (TEP1) from Saccharomyces cerevisiae (strain ATCC 204508 / S288c) (Baker's yeast).